The primary structure comprises 192 residues: Thymidine kinase (192 aa).

Residues S9 to S16 and D87 to Q90 contribute to the ATP site. E88 acts as the Proton acceptor in catalysis. Positions 145, 147, 182, and 185 each coordinate Zn(2+).

The protein belongs to the thymidine kinase family. In terms of assembly, homotetramer.

It is found in the cytoplasm. It carries out the reaction thymidine + ATP = dTMP + ADP + H(+). This is Thymidine kinase from Photobacterium profundum (strain SS9).